A 446-amino-acid polypeptide reads, in one-letter code: Maltoporin (446 aa).

A signal peptide spans 1 to 25 (MMITLRKLPLAVAVAAGVMSAQAMA).

The protein belongs to the porin LamB (TC 1.B.3) family. As to quaternary structure, homotrimer formed of three 18-stranded antiparallel beta-barrels, containing three independent channels.

The protein resides in the cell outer membrane. The catalysed reaction is beta-maltose(in) = beta-maltose(out). Its function is as follows. Involved in the transport of maltose and maltodextrins. In Escherichia coli (strain SE11), this protein is Maltoporin.